The following is a 912-amino-acid chain: Protein translocase subunit SecA (912 aa).

Residues glutamine 87, 105-109 (GEGKT), and aspartate 508 each bind ATP. Residues 855-912 (QHQDAGGYGADEEVEQMQGGNAPVPVSQVTRDEPKVGRNDPCPCGSGKKYKHCHGQLS) form a disordered region. The Zn(2+) site is built by cysteine 896, cysteine 898, cysteine 907, and histidine 908. Positions 902–912 (KKYKHCHGQLS) are enriched in basic residues.

The protein belongs to the SecA family. Monomer and homodimer. Part of the essential Sec protein translocation apparatus which comprises SecA, SecYEG and auxiliary proteins SecDF-YajC and YidC. It depends on Zn(2+) as a cofactor.

The protein localises to the cell inner membrane. Its subcellular location is the cytoplasm. It carries out the reaction ATP + H2O + cellular proteinSide 1 = ADP + phosphate + cellular proteinSide 2.. In terms of biological role, part of the Sec protein translocase complex. Interacts with the SecYEG preprotein conducting channel. Has a central role in coupling the hydrolysis of ATP to the transfer of proteins into and across the cell membrane, serving both as a receptor for the preprotein-SecB complex and as an ATP-driven molecular motor driving the stepwise translocation of polypeptide chains across the membrane. This is Protein translocase subunit SecA from Xanthomonas campestris pv. campestris (strain 8004).